Consider the following 205-residue polypeptide: Protein TK0174 (205 aa).

Residues 7–201 (EWGEFLVRLA…EEYPRGPVRR (195 aa)) form the AMMECR1 domain.

This chain is Protein TK0174, found in Thermococcus kodakarensis (strain ATCC BAA-918 / JCM 12380 / KOD1) (Pyrococcus kodakaraensis (strain KOD1)).